A 197-amino-acid chain; its full sequence is Holliday junction branch migration complex subunit RuvA (197 aa).

The segment at M1–R63 is domain I. A domain II region spans residues S64–I142. Residues A143–S147 are flexible linker. Residues A148 to K197 form a domain III region.

It belongs to the RuvA family. In terms of assembly, homotetramer. Forms an RuvA(8)-RuvB(12)-Holliday junction (HJ) complex. HJ DNA is sandwiched between 2 RuvA tetramers; dsDNA enters through RuvA and exits via RuvB. An RuvB hexamer assembles on each DNA strand where it exits the tetramer. Each RuvB hexamer is contacted by two RuvA subunits (via domain III) on 2 adjacent RuvB subunits; this complex drives branch migration. In the full resolvosome a probable DNA-RuvA(4)-RuvB(12)-RuvC(2) complex forms which resolves the HJ.

The protein localises to the cytoplasm. The RuvA-RuvB-RuvC complex processes Holliday junction (HJ) DNA during genetic recombination and DNA repair, while the RuvA-RuvB complex plays an important role in the rescue of blocked DNA replication forks via replication fork reversal (RFR). RuvA specifically binds to HJ cruciform DNA, conferring on it an open structure. The RuvB hexamer acts as an ATP-dependent pump, pulling dsDNA into and through the RuvAB complex. HJ branch migration allows RuvC to scan DNA until it finds its consensus sequence, where it cleaves and resolves the cruciform DNA. This chain is Holliday junction branch migration complex subunit RuvA, found in Streptococcus pneumoniae (strain Taiwan19F-14).